The chain runs to 289 residues: Shikimate dehydrogenase (NADP(+)) (289 aa).

Shikimate is bound by residues serine 22–serine 24 and threonine 69. Catalysis depends on lysine 73, which acts as the Proton acceptor. An NADP(+)-binding site is contributed by glutamate 85. Residues asparagine 94 and aspartate 109 each contribute to the shikimate site. NADP(+)-binding positions include glycine 134–alanine 138, asparagine 158–arginine 163, and isoleucine 226. Tyrosine 228 serves as a coordination point for shikimate. Glycine 249 is a binding site for NADP(+).

It belongs to the shikimate dehydrogenase family. As to quaternary structure, homodimer.

The enzyme catalyses shikimate + NADP(+) = 3-dehydroshikimate + NADPH + H(+). The protein operates within metabolic intermediate biosynthesis; chorismate biosynthesis; chorismate from D-erythrose 4-phosphate and phosphoenolpyruvate: step 4/7. Its function is as follows. Involved in the biosynthesis of the chorismate, which leads to the biosynthesis of aromatic amino acids. Catalyzes the reversible NADPH linked reduction of 3-dehydroshikimate (DHSA) to yield shikimate (SA). This is Shikimate dehydrogenase (NADP(+)) from Brucella ovis (strain ATCC 25840 / 63/290 / NCTC 10512).